A 376-amino-acid chain; its full sequence is UDP-N-acetylglucosamine--N-acetylmuramyl-(pentapeptide) pyrophosphoryl-undecaprenol N-acetylglucosamine transferase (376 aa).

Residues 14 to 16 (TGG), asparagine 128, arginine 169, serine 201, isoleucine 256, and glutamine 301 contribute to the UDP-N-acetyl-alpha-D-glucosamine site.

It belongs to the glycosyltransferase 28 family. MurG subfamily.

Its subcellular location is the cell inner membrane. It catalyses the reaction di-trans,octa-cis-undecaprenyl diphospho-N-acetyl-alpha-D-muramoyl-L-alanyl-D-glutamyl-meso-2,6-diaminopimeloyl-D-alanyl-D-alanine + UDP-N-acetyl-alpha-D-glucosamine = di-trans,octa-cis-undecaprenyl diphospho-[N-acetyl-alpha-D-glucosaminyl-(1-&gt;4)]-N-acetyl-alpha-D-muramoyl-L-alanyl-D-glutamyl-meso-2,6-diaminopimeloyl-D-alanyl-D-alanine + UDP + H(+). Its pathway is cell wall biogenesis; peptidoglycan biosynthesis. In terms of biological role, cell wall formation. Catalyzes the transfer of a GlcNAc subunit on undecaprenyl-pyrophosphoryl-MurNAc-pentapeptide (lipid intermediate I) to form undecaprenyl-pyrophosphoryl-MurNAc-(pentapeptide)GlcNAc (lipid intermediate II). The polypeptide is UDP-N-acetylglucosamine--N-acetylmuramyl-(pentapeptide) pyrophosphoryl-undecaprenol N-acetylglucosamine transferase (Phocaeicola vulgatus (strain ATCC 8482 / DSM 1447 / JCM 5826 / CCUG 4940 / NBRC 14291 / NCTC 11154) (Bacteroides vulgatus)).